The sequence spans 469 residues: Trigger factor (469 aa).

In terms of domain architecture, PPIase FKBP-type spans 162-243 (GDFVSIDLSA…VKSVKERELP (82 aa)). The interval 429–469 (NTIDTSEFFGKHAQSDKADQKTEEADPNSDAIDEEVDEAAE) is disordered. Positions 437–452 (FGKHAQSDKADQKTEE) are enriched in basic and acidic residues. Residues 453 to 469 (ADPNSDAIDEEVDEAAE) show a composition bias toward acidic residues.

Belongs to the FKBP-type PPIase family. Tig subfamily.

The protein resides in the cytoplasm. The enzyme catalyses [protein]-peptidylproline (omega=180) = [protein]-peptidylproline (omega=0). In terms of biological role, involved in protein export. Acts as a chaperone by maintaining the newly synthesized protein in an open conformation. Functions as a peptidyl-prolyl cis-trans isomerase. This chain is Trigger factor, found in Mycobacterium leprae (strain Br4923).